A 446-amino-acid polypeptide reads, in one-letter code: Tubulin beta-1 chain (446 aa).

The GTP site is built by Q11, E69, S138, G142, T143, G144, N204, and N226. A Mg(2+)-binding site is contributed by E69.

It belongs to the tubulin family. As to quaternary structure, dimer of alpha and beta chains. A typical microtubule is a hollow water-filled tube with an outer diameter of 25 nm and an inner diameter of 15 nM. Alpha-beta heterodimers associate head-to-tail to form protofilaments running lengthwise along the microtubule wall with the beta-tubulin subunit facing the microtubule plus end conferring a structural polarity. Microtubules usually have 13 protofilaments but different protofilament numbers can be found in some organisms and specialized cells. Requires Mg(2+) as cofactor.

Its subcellular location is the cytoplasm. The protein localises to the cytoskeleton. In terms of biological role, tubulin is the major constituent of microtubules, a cylinder consisting of laterally associated linear protofilaments composed of alpha- and beta-tubulin heterodimers. Microtubules grow by the addition of GTP-tubulin dimers to the microtubule end, where a stabilizing cap forms. Below the cap, tubulin dimers are in GDP-bound state, owing to GTPase activity of alpha-tubulin. In Suillus bovinus (Jersey cow bolete), this protein is Tubulin beta-1 chain (TUBB1).